Reading from the N-terminus, the 940-residue chain is Lon protease homolog 1, mitochondrial (940 aa).

The transit peptide at 1-61 directs the protein to the mitochondrion; that stretch reads MLKLFTSSAS…AFFCSEPTNG (61 aa). The tract at residues 70–90 is disordered; the sequence is KAVESDSEVSDSKSSSAIVPT. Phosphoserine is present on serine 74. One can recognise a Lon N-terminal domain in the interval 100–309; the sequence is VLALPVPHRP…LTLELMKKEM (210 aa). 464-471 provides a ligand contact to ATP; it reads GPPGVGKT. The region spanning 751–935 is the Lon proteolytic domain; sequence QTPVGVVMGL…GKIFELAFGY (185 aa). Residues serine 841 and lysine 884 contribute to the active site.

This sequence belongs to the peptidase S16 family. As to quaternary structure, homohexamer or homoheptamer. Organized in a ring with a central cavity.

Its subcellular location is the mitochondrion matrix. The enzyme catalyses Hydrolysis of proteins in presence of ATP.. ATP-dependent serine protease that mediates the selective degradation of misfolded, unassembled or oxidatively damaged polypeptides as well as certain short-lived regulatory proteins in the mitochondrial matrix. May also have a chaperone function in the assembly of inner membrane protein complexes. Participates in the regulation of mitochondrial gene expression and in the maintenance of the integrity of the mitochondrial genome. Binds to mitochondrial DNA in a site-specific manner. This is Lon protease homolog 1, mitochondrial (LON1) from Arabidopsis thaliana (Mouse-ear cress).